A 970-amino-acid chain; its full sequence is Serine/threonine-protein kinase PLK4 (970 aa).

The 254-residue stretch at 12–265 (FKVGNLLGKG…LSSVLDHPFM (254 aa)) folds into the Protein kinase domain. ATP is bound by residues 18–26 (LGKGSFAGV) and Lys-41. Residues Lys-45 and Lys-46 each carry the N6-acetyllysine modification. Residue Asp-136 is the Proton acceptor of the active site. The tract at residues 324 to 373 (VFPKNKSSSDFSSSGDGNSFYTQWGNQETSNSGRGRVIQDAEERPHSRYL) is disordered. Residues 327–343 (KNKSSSDFSSSGDGNSF) show a composition bias toward low complexity. The span at 344-356 (YTQWGNQETSNSG) shows a compositional bias: polar residues. The segment covering 360–369 (VIQDAEERPH) has biased composition (basic and acidic residues). Residue Ser-401 is modified to Phosphoserine. The interval 498-540 (ISPTRDFQGHPDLQKDTSKNAWTDTKVKKNSDASDNAHSVKQP) is disordered. A compositionally biased stretch (basic and acidic residues) spans 504–515 (FQGHPDLQKDTS). A compositionally biased stretch (polar residues) spans 530 to 540 (ASDNAHSVKQP). Residues 586 to 699 (TLRSITSPLV…SRFVQLVRSK (114 aa)) enclose the Cryptic POLO box 1 (CPB1) domain. The residue at position 665 (Ser-665) is a Phosphoserine. In terms of domain architecture, Cryptic POLO box 2 (CPB2) spans 700 to 813 (SPKITYFTRY…GRKPGSTSSP (114 aa)). The segment at 808–829 (GSTSSPKALSPPPSVDSNYPTR) is disordered. At Ser-817 the chain carries Phosphoserine. The POLO box domain occupies 886 to 964 (QLLKSVFVKN…LSSILLMFSN (79 aa)).

This sequence belongs to the protein kinase superfamily. Ser/Thr protein kinase family. CDC5/Polo subfamily. In terms of assembly, homodimer. Interacts with CEP152 (via N-terminus). Interacts with CEP78; this interaction may be important for proper PLK4 localization to the centriole and PLK4-induced overduplication of centrioles. Interacts with CEP131. Interacts simultaneously with TENT5C and CEP192. Interacts with TENT5C; this interaction leads to the TENT5C recruitment in the centrosome. Interacts with CEP85; this interaction may be important in cell migration and centriole assembly. Ubiquitinated; leading to its degradation by the proteasome. Deubiquitinated by USP54; leading to PLK4 stabilization. Post-translationally, tyrosine-phosphorylated by TEC. In terms of processing, acetylation by KAT2A and KAT2B impairs kinase activity by shifting the kinase to an inactive conformation.

It is found in the cytoplasm. It localises to the cytoskeleton. Its subcellular location is the microtubule organizing center. The protein localises to the centrosome. The protein resides in the centriole. It is found in the nucleus. It localises to the nucleolus. Its subcellular location is the cleavage furrow. The catalysed reaction is L-seryl-[protein] + ATP = O-phospho-L-seryl-[protein] + ADP + H(+). It catalyses the reaction L-threonyl-[protein] + ATP = O-phospho-L-threonyl-[protein] + ADP + H(+). Its function is as follows. Serine/threonine-protein kinase that plays a central role in centriole duplication. Able to trigger procentriole formation on the surface of the parental centriole cylinder, leading to the recruitment of centriole biogenesis proteins such as SASS6, CPAP, CCP110, CEP135 and gamma-tubulin. When overexpressed, it is able to induce centrosome amplification through the simultaneous generation of multiple procentrioles adjoining each parental centriole during S phase. Phosphorylates 'Ser-151' of FBXW5 during the G1/S transition, leading to inhibit FBXW5 ability to ubiquitinate SASS6. Its central role in centriole replication suggests a possible role in tumorigenesis, centrosome aberrations being frequently observed in tumors. Also involved in deuterosome-mediated centriole amplification in multiciliated that can generate more than 100 centrioles. Also involved in trophoblast differentiation by phosphorylating HAND1, leading to disrupt the interaction between HAND1 and MDFIC and activate HAND1. Phosphorylates CDC25C and CHEK2. Required for the recruitment of STIL to the centriole and for STIL-mediated centriole amplification. Phosphorylates CEP131 and PCM1 which is essential for proper organization and integrity of centriolar satellites. This chain is Serine/threonine-protein kinase PLK4, found in Pongo abelii (Sumatran orangutan).